The sequence spans 398 residues: ATP-dependent RNA helicase RhlB (398 aa).

Residues 9–37 (TRFHDFKLSNELMHAIHDLGFPYCTPIQA) carry the Q motif motif. The Helicase ATP-binding domain occupies 40–220 (LGYTLRGQDA…KQWTTNPAIV (181 aa)). 53-60 (AQTGTGKT) serves as a coordination point for ATP. A DEAD box motif is present at residues 166–169 (DEAD). The Helicase C-terminal domain occupies 243–393 (DKYKLLYNLV…MPPDELLKPV (151 aa)).

This sequence belongs to the DEAD box helicase family. RhlB subfamily. As to quaternary structure, component of the RNA degradosome, which is a multiprotein complex involved in RNA processing and mRNA degradation.

It is found in the cytoplasm. It catalyses the reaction ATP + H2O = ADP + phosphate + H(+). Its function is as follows. DEAD-box RNA helicase involved in RNA degradation. Has RNA-dependent ATPase activity and unwinds double-stranded RNA. The sequence is that of ATP-dependent RNA helicase RhlB from Pseudomonas putida (strain ATCC 47054 / DSM 6125 / CFBP 8728 / NCIMB 11950 / KT2440).